The sequence spans 388 residues: MICRTIVEGTTKISVPIPPPDVNFPPSAAPVFYNPEMELNRDINVAATAAFVKRLLSRKDLKREEVRYVDAFSASGIRGLRIAGEVGIHSTMNDWNPEAFELIKENIKINGLEEKAQATRKNANVLLHEQKFHIVDVDPFGTPAPYLDAAATAAQGMLSVTATDTAPLCGAHLNSGIRKYAAVPLNTEYHSEMGLRVLLGACARECAKHEKGMLPLLSHVTRHYVRSYLEVLPGTKHADRALKSMGFSIYCPKCGFRGPVYGLAVHIEKECPACGALTKIAGPLWLGPFREPKFCNEVLSELEAHPLNTKEKAKKIITFCRDELDIPMFYDQHVICKELGASATGIETLIEALKAGGFEASRTHFSGTSFRTDAPIAEIKKIIQALSG.

Residues 4 to 383 enclose the Trm1 methyltransferase domain; sequence RTIVEGTTKI…APIAEIKKII (380 aa). Positions 41, 78, 94, and 123 each coordinate S-adenosyl-L-methionine. Cys251, Cys254, Cys271, and Cys274 together coordinate Zn(2+).

Belongs to the class I-like SAM-binding methyltransferase superfamily. Trm1 family.

The catalysed reaction is guanosine(26) in tRNA + 2 S-adenosyl-L-methionine = N(2)-dimethylguanosine(26) in tRNA + 2 S-adenosyl-L-homocysteine + 2 H(+). Dimethylates a single guanine residue at position 26 of a number of tRNAs using S-adenosyl-L-methionine as donor of the methyl groups. This chain is tRNA (guanine(26)-N(2))-dimethyltransferase, found in Methanosarcina acetivorans (strain ATCC 35395 / DSM 2834 / JCM 12185 / C2A).